We begin with the raw amino-acid sequence, 260 residues long: Methionine-rich nacre protein (260 aa).

A signal peptide spans 1-19 (MRRILCLAVVIFIINDVSS). Positions 23-75 (GSNKNWKKSGMSLSSPGNKKPTGNNNAVPQKSKMNNVNQNSLSQPKRPSHPGN) are disordered. Polar residues predominate over residues 33-68 (MSLSSPGNKKPTGNNNAVPQKSKMNNVNQNSLSQPK).

Expressed in mantle distal zone, mantle margin and grafted pearl pockets. Not expressed in adductor muscle, gills, hemocytes or ungrafted pearl pockets. Within the mantle, specifically expressed in mineralizing outer epithelium cells (at protein level). After secretion incorporated into acid-insoluble nacre matrix of shell and pearl (at protein level). Not found in acid-insoluble matrix of shell prisms (at protein level).

It localises to the secreted. The polypeptide is Methionine-rich nacre protein (Margaritifera margaritifera (Freshwater pearl mussel)).